Reading from the N-terminus, the 38-residue chain is Large ribosomal subunit protein bL36 (38 aa).

This sequence belongs to the bacterial ribosomal protein bL36 family.

The protein is Large ribosomal subunit protein bL36 of Mycoplasma mobile (strain ATCC 43663 / 163K / NCTC 11711) (Mesomycoplasma mobile).